The chain runs to 156 residues: Small ribosomal subunit protein uS7 (156 aa).

The protein belongs to the universal ribosomal protein uS7 family. As to quaternary structure, part of the 30S ribosomal subunit. Contacts proteins S9 and S11.

Functionally, one of the primary rRNA binding proteins, it binds directly to 16S rRNA where it nucleates assembly of the head domain of the 30S subunit. Is located at the subunit interface close to the decoding center, probably blocks exit of the E-site tRNA. This chain is Small ribosomal subunit protein uS7, found in Herminiimonas arsenicoxydans.